The chain runs to 213 residues: Ribosomal RNA small subunit methyltransferase G (213 aa).

Residues Gly-83, Leu-88, 132 to 133 (IE), and Arg-146 each bind S-adenosyl-L-methionine.

Belongs to the methyltransferase superfamily. RNA methyltransferase RsmG family.

It is found in the cytoplasm. It carries out the reaction guanosine(527) in 16S rRNA + S-adenosyl-L-methionine = N(7)-methylguanosine(527) in 16S rRNA + S-adenosyl-L-homocysteine. In terms of biological role, specifically methylates the N7 position of guanine in position 527 of 16S rRNA. This Granulibacter bethesdensis (strain ATCC BAA-1260 / CGDNIH1) protein is Ribosomal RNA small subunit methyltransferase G.